A 563-amino-acid chain; its full sequence is 3-oxosteroid 1-dehydrogenase (563 aa).

7-36 (DVVVVGSGAAGMVAALVAAHRGLSTVVVEK) lines the FAD pocket.

This sequence belongs to the FAD-dependent oxidoreductase 2 family. 3-oxosteroid dehydrogenase subfamily. FAD serves as cofactor.

The catalysed reaction is a 3-oxosteroid + A = a 3-oxo-Delta(1)-steroid + AH2. The enzyme catalyses a 3-oxo-Delta(4)-steroid + A = a 3-oxo-Delta(1,4)-steroid + AH2. It catalyses the reaction 3-oxochol-4-en-22-oyl-CoA + NAD(+) = 3-oxochola-1,4-dien-22-oyl-CoA + NADH + H(+). Involved in the degradation of cholesterol. Catalyzes the elimination of the C-1 and C-2 hydrogen atoms of the A-ring from the polycyclic ring structure of 3-ketosteroids. Has a clear preference for 3-ketosteroids with a saturated A-ring, displaying highest activity on 5alpha-AD (5alpha-androstane-3,17-dione) and 5alpha-T (5alpha-testosterone, also known as 17beta-hydroxy-5alpha-androstane-3-one). Is also involved in the formation of 3-keto-1,4-diene-steroid from 3-keto-4-ene-steroid. Catalyzes the conversion of 3-oxo-23,24-bisnorchol-4-en-22-oyl-coenzyme A thioester (4-BNC-CoA) to 3-oxo-23,24-bisnorchola-1,4-dien-22-oyl-coenzyme A thioester (1,4-BNC-CoA). This Mycobacterium tuberculosis (strain ATCC 25618 / H37Rv) protein is 3-oxosteroid 1-dehydrogenase (kstD).